A 439-amino-acid polypeptide reads, in one-letter code: Signal recognition particle 54 kDa protein (439 aa).

Residues 104 to 111, 184 to 188, and 242 to 245 contribute to the GTP site; these read GLQGSGKT, DTAGR, and SKLD.

It belongs to the GTP-binding SRP family. SRP54 subfamily. Part of the signal recognition particle protein translocation system, which is composed of SRP and FtsY. Archaeal SRP consists of a 7S RNA molecule of 300 nucleotides and two protein subunits: SRP54 and SRP19.

The protein resides in the cytoplasm. The catalysed reaction is GTP + H2O = GDP + phosphate + H(+). Functionally, involved in targeting and insertion of nascent membrane proteins into the cytoplasmic membrane. Binds to the hydrophobic signal sequence of the ribosome-nascent chain (RNC) as it emerges from the ribosomes. The SRP-RNC complex is then targeted to the cytoplasmic membrane where it interacts with the SRP receptor FtsY. The sequence is that of Signal recognition particle 54 kDa protein from Methanococcoides burtonii (strain DSM 6242 / NBRC 107633 / OCM 468 / ACE-M).